Here is a 251-residue protein sequence, read N- to C-terminus: Cell division protein ZapD (251 aa).

The protein belongs to the ZapD family. Interacts with FtsZ.

It localises to the cytoplasm. In terms of biological role, cell division factor that enhances FtsZ-ring assembly. Directly interacts with FtsZ and promotes bundling of FtsZ protofilaments, with a reduction in FtsZ GTPase activity. The chain is Cell division protein ZapD from Burkholderia mallei (strain NCTC 10247).